The sequence spans 288 residues: DegV domain-containing protein SAS0714 (288 aa).

In terms of domain architecture, DegV spans Ile3 to Gly282. Hexadecanoate contacts are provided by Thr62 and Ser95.

May bind long-chain fatty acids, such as palmitate, and may play a role in lipid transport or fatty acid metabolism. The chain is DegV domain-containing protein SAS0714 from Staphylococcus aureus (strain MSSA476).